Reading from the N-terminus, the 809-residue chain is Leucine-rich repeat and calponin homology domain-containing protein (809 aa).

The interval 27–53 (GSASLPGSGTGSGSGIGHAGNTSSSTS) is disordered. A compositionally biased stretch (gly residues) spans 34–44 (SGTGSGSGIGH). 9 LRR repeats span residues 72–96 (EAHFSGELILTNRKLKDFPRTGTKY), 98–121 (LTDTVIADLSRNRFAELPEEVTTF), 122–144 (AFLETLLLYHNTIRSIPESVKQL), 145–168 (SSLTYLDLRSNQLSSLPREICFLP), 170–189 (QVLLVSNNRLTSLPDELGRL), 191–213 (QTLTDLDASYNQLANLPARLGEL), 214–236 (RSLRSLSLRSNHLLYLPRELTCL), 238–258 (LISLDVSNNKIASLPLEIRHM), and 260–282 (TLVELQLENNPLTSPPASLCMRG). Disordered stretches follow at residues 295–373 (TKDE…LHCV), 423–442 (LSYAHSNSSSNGSSPDQDDD), and 490–550 (KHPN…VDDV). The segment covering 319-336 (HNSSGNVLEASTTGSTNN) has biased composition (polar residues). Residues 351 to 368 (GLDKRWSHDAPTKSKTDS) are compositionally biased toward basic and acidic residues. Residues 518 to 532 (NTLPKSIMKQNSNQI) are compositionally biased toward polar residues. The 115-residue stretch at 662-776 (QREETELMSQ…TVGELFRLHG (115 aa)) folds into the Calponin-homology (CH) domain. Positions 783–809 (GNSSGAATPTKSPTRTTRATMSPTPLA) are disordered. Residues 788–809 (AATPTKSPTRTTRATMSPTPLA) are compositionally biased toward polar residues.

It is found in the cytoplasm. The protein resides in the cytoskeleton. Its subcellular location is the cell cortex. The protein localises to the cleavage furrow. In terms of biological role, may play a role in the stabilization of the actin-rich cell cortex during cell division. This Drosophila melanogaster (Fruit fly) protein is Leucine-rich repeat and calponin homology domain-containing protein.